Consider the following 306-residue polypeptide: UDP-3-O-acyl-N-acetylglucosamine deacetylase (306 aa).

The Zn(2+) site is built by His-79, His-238, and Asp-242. The active-site Proton donor is His-265.

This sequence belongs to the LpxC family. Requires Zn(2+) as cofactor.

It catalyses the reaction a UDP-3-O-[(3R)-3-hydroxyacyl]-N-acetyl-alpha-D-glucosamine + H2O = a UDP-3-O-[(3R)-3-hydroxyacyl]-alpha-D-glucosamine + acetate. It functions in the pathway glycolipid biosynthesis; lipid IV(A) biosynthesis; lipid IV(A) from (3R)-3-hydroxytetradecanoyl-[acyl-carrier-protein] and UDP-N-acetyl-alpha-D-glucosamine: step 2/6. Functionally, catalyzes the hydrolysis of UDP-3-O-myristoyl-N-acetylglucosamine to form UDP-3-O-myristoylglucosamine and acetate, the committed step in lipid A biosynthesis. This chain is UDP-3-O-acyl-N-acetylglucosamine deacetylase, found in Shewanella piezotolerans (strain WP3 / JCM 13877).